The chain runs to 1145 residues: DNA-directed RNA polymerase subunit beta (1145 aa).

Residues 1101-1112 (LPEERRVSSSKE) are compositionally biased toward basic and acidic residues. The segment at 1101–1145 (LPEERRVSSSKEEIEEEEEVEDNSDEFDETFLEEAEDDFSLDDED) is disordered. Acidic residues predominate over residues 1113–1145 (EIEEEEEVEDNSDEFDETFLEEAEDDFSLDDED).

It belongs to the RNA polymerase beta chain family. In terms of assembly, the RNAP catalytic core consists of 2 alpha, 1 beta, 1 beta' and 1 omega subunit. When a sigma factor is associated with the core the holoenzyme is formed, which can initiate transcription.

The enzyme catalyses RNA(n) + a ribonucleoside 5'-triphosphate = RNA(n+1) + diphosphate. DNA-dependent RNA polymerase catalyzes the transcription of DNA into RNA using the four ribonucleoside triphosphates as substrates. In Desulforamulus reducens (strain ATCC BAA-1160 / DSM 100696 / MI-1) (Desulfotomaculum reducens), this protein is DNA-directed RNA polymerase subunit beta.